The primary structure comprises 20 residues: Hemoglobinase-like protein 1 (20 aa).

This sequence belongs to the peptidase C13 family.

The enzyme catalyses Hydrolysis of proteins and small molecule substrates at -Asn-|-Xaa- bonds.. The polypeptide is Hemoglobinase-like protein 1 (Fasciola hepatica (Liver fluke)).